The sequence spans 103 residues: Large ribosomal subunit protein uL24 (103 aa).

Belongs to the universal ribosomal protein uL24 family. As to quaternary structure, part of the 50S ribosomal subunit.

In terms of biological role, one of two assembly initiator proteins, it binds directly to the 5'-end of the 23S rRNA, where it nucleates assembly of the 50S subunit. Its function is as follows. One of the proteins that surrounds the polypeptide exit tunnel on the outside of the subunit. In Syntrophomonas wolfei subsp. wolfei (strain DSM 2245B / Goettingen), this protein is Large ribosomal subunit protein uL24.